Reading from the N-terminus, the 450-residue chain is C4-dicarboxylate transport protein (450 aa).

Transmembrane regions (helical) follow at residues 25-45 (VVFA…YGAA), 56-76 (LIKM…IASM), 90-110 (MAYF…VANV), 162-182 (ILQV…VGDA), 200-220 (LVNI…AFTI), 234-254 (LVLT…GAVA), 319-339 (IYMT…LTLG), and 367-387 (AATL…ILGV).

Belongs to the dicarboxylate/amino acid:cation symporter (DAACS) (TC 2.A.23) family.

It is found in the cell inner membrane. Responsible for the transport of dicarboxylates such as succinate, fumarate, and malate from the periplasm across the membrane. This is C4-dicarboxylate transport protein from Acidovorax sp. (strain JS42).